The chain runs to 405 residues: Arginine biosynthesis bifunctional protein ArgJ (405 aa).

Substrate-binding residues include Thr-152, Lys-178, Thr-189, Glu-276, Asn-400, and Thr-405. Catalysis depends on Thr-189, which acts as the Nucleophile.

This sequence belongs to the ArgJ family. As to quaternary structure, heterotetramer of two alpha and two beta chains.

It localises to the cytoplasm. It carries out the reaction N(2)-acetyl-L-ornithine + L-glutamate = N-acetyl-L-glutamate + L-ornithine. It catalyses the reaction L-glutamate + acetyl-CoA = N-acetyl-L-glutamate + CoA + H(+). Its pathway is amino-acid biosynthesis; L-arginine biosynthesis; L-ornithine and N-acetyl-L-glutamate from L-glutamate and N(2)-acetyl-L-ornithine (cyclic): step 1/1. It participates in amino-acid biosynthesis; L-arginine biosynthesis; N(2)-acetyl-L-ornithine from L-glutamate: step 1/4. In terms of biological role, catalyzes two activities which are involved in the cyclic version of arginine biosynthesis: the synthesis of N-acetylglutamate from glutamate and acetyl-CoA as the acetyl donor, and of ornithine by transacetylation between N(2)-acetylornithine and glutamate. In Pseudomonas syringae pv. syringae (strain B728a), this protein is Arginine biosynthesis bifunctional protein ArgJ.